The chain runs to 155 residues: Small ribosomal subunit protein uS7 (155 aa).

The protein belongs to the universal ribosomal protein uS7 family. In terms of assembly, part of the 30S ribosomal subunit. Contacts proteins S9 and S11.

Functionally, one of the primary rRNA binding proteins, it binds directly to 16S rRNA where it nucleates assembly of the head domain of the 30S subunit. Is located at the subunit interface close to the decoding center, probably blocks exit of the E-site tRNA. The protein is Small ribosomal subunit protein uS7 of Mycoplasma pneumoniae (strain ATCC 29342 / M129 / Subtype 1) (Mycoplasmoides pneumoniae).